A 294-amino-acid chain; its full sequence is Non-selective voltage-gated ion channel VDAC2 (294 aa).

Alanine 2 carries the post-translational modification N-acetylalanine. ATP is bound by residues lysine 23 and lysine 31. N6-acetyllysine; alternate is present on lysine 31. Residue lysine 31 is modified to N6-succinyllysine; alternate. Residue lysine 31 forms a Glycyl lysine isopeptide (Lys-Gly) (interchain with G-Cter in ubiquitin); alternate linkage. Beta stranded transmembrane passes span 37-46 (LVKLDVKTKS) and 50-58 (VEFSTSGSS). Lysine 64 is covalently cross-linked (Glycyl lysine isopeptide (Lys-Gly) (interchain with G-Cter in ubiquitin)). A beta stranded transmembrane segment spans residues 65 to 75 (VTGTLETKYKW). Residue tyrosine 78 is modified to Phosphotyrosine. 3 consecutive transmembrane segments (beta stranded) span residues 80–87 (LTFTEKWN), 91–100 (TLGTEIAIED), and 106–115 (LKLTFDTTFS). Threonine 118 carries the phosphothreonine modification. Lysine 120 is modified (N6-acetyllysine; alternate). Residue lysine 120 forms a Glycyl lysine isopeptide (Lys-Gly) (interchain with G-Cter in ubiquitin); alternate linkage. Lysine 121 participates in a covalent cross-link: Glycyl lysine isopeptide (Lys-Gly) (interchain with G-Cter in ubiquitin). A run of 4 beta stranded transmembrane segments spans residues 122 to 131 (SGKIKSSYKR), 134 to 141 (INLGCDVD), 148 to 156 (AIHGSAVFG), and 161 to 169 (LAGYQMTFD). Lysine 172 participates in a covalent cross-link: Glycyl lysine isopeptide (Lys-Gly) (interchain with G-Cter in ubiquitin). Beta stranded transmembrane passes span 174–186 (KLTRNNFAVGYRT), 189–196 (FQLHTNVN), 200–209 (EFGGSIYQKV), 213–222 (LDTSVNLAWT), 229–238 (RFGIAAKYQL), and 242–249 (ASISAKVN). Position 251 is a phosphoserine (serine 251). NAD(+) is bound by residues 253–255 (LIG) and 271–275 (SALVD). Transmembrane regions (beta stranded) follow at residues 253 to 262 (LIGVGYTQTL) and 265 to 274 (GVKLTLSALV). Lysine 277 is modified (N6-acetyllysine; alternate). Lysine 277 is covalently cross-linked (Glycyl lysine isopeptide (Lys-Gly) (interchain with G-Cter in ubiquitin); alternate). The chain crosses the membrane as a beta stranded span at residues 284–293 (HKLGLALELE).

The protein belongs to the eukaryotic mitochondrial porin family. Monomer, homodimer and higher order oligomers; formation of higher order structures is necessary for scramblase activity. Interacts with ARMC12 in a TBC1D21-dependent manner. Interacts with KLC3. Interacts with SPATA33. Interacts with PPP3CC in a SPATA33-dependent manner. In terms of processing, ubiquitinated by PRKN during mitophagy, leading to its degradation and enhancement of mitophagy. Deubiquitinated by USP30.

It is found in the mitochondrion outer membrane. It localises to the membrane. The enzyme catalyses chloride(in) = chloride(out). It carries out the reaction K(+)(in) = K(+)(out). It catalyses the reaction a 1,2-diacyl-sn-glycero-3-phospho-L-serine(in) = a 1,2-diacyl-sn-glycero-3-phospho-L-serine(out). The catalysed reaction is a 1,2-diacyl-sn-glycero-3-phosphocholine(in) = a 1,2-diacyl-sn-glycero-3-phosphocholine(out). The enzyme catalyses a 1,2-diacyl-sn-glycero-3-phospho-(1D-myo-inositol)(in) = a 1,2-diacyl-sn-glycero-3-phospho-(1D-myo-inositol)(out). Functionally, non-selective voltage-gated ion channel that mediates the transport of anions and cations through the mitochondrion outer membrane and plasma membrane. The channel adopts an open conformation at zero mV and a closed conformation at both positive and negative potentials. There are two populations of channels; the main that functions in a lower open-state conductance with lower ion selectivity, that switch, in a voltage-dependent manner, from the open to a low-conducting 'closed' state and the other that has a normal ion selectivity in the typical high conductance, 'open' state. Binds various lipids, including the sphingolipid ceramide, the phospholipid phosphatidylcholine, and the sterols cholesterol and oxysterol. Binding of ceramide promotes the mitochondrial outer membrane permeabilization (MOMP) apoptotic pathway. Catalyzes the scrambling of phospholipids across the outer mitochondrial membrane; the mechanism is unrelated to channel activity and is capable of translocating both anionic and zwitterionic phospholipids. This is Non-selective voltage-gated ion channel VDAC2 from Bos taurus (Bovine).